We begin with the raw amino-acid sequence, 920 residues long: 2-oxoadipate dehydrogenase complex component E1 (920 aa).

Lysine 183 and lysine 188 each carry N6-succinyllysine. Residues 299–318 (GKTRGRQQSQEDGDYSPNGS) are disordered. 2 positions are modified to N6-succinyllysine: lysine 800 and lysine 818.

Belongs to the alpha-ketoglutarate dehydrogenase family. In terms of assembly, the 2-oxoadipate dehydrogenase complex is composed of OADH (2-oxoadipate dehydrogenase; E1a), DLST (dihydrolipoamide succinyltransferase; E2) and DLD (dihydrolipoamide dehydrogenase; E3). E1a functional unit is a dimer. It depends on thiamine diphosphate as a cofactor.

Its subcellular location is the mitochondrion. It carries out the reaction N(6)-[(R)-lipoyl]-L-lysyl-[protein] + 2-oxoadipate + H(+) = N(6)-[(R)-S(8)-glutaryldihydrolipoyl]-L-lysyl-[protein] + CO2. It participates in amino-acid degradation. 2-oxoadipate dehydrogenase (E1a) component of the 2-oxoadipate dehydrogenase complex (OADHC). Participates in the first step, rate limiting for the overall conversion of 2-oxoadipate (alpha-ketoadipate) to glutaryl-CoA and CO(2) catalyzed by the whole OADHC. Catalyzes the irreversible decarboxylation of 2-oxoadipate via the thiamine diphosphate (ThDP) cofactor and subsequent transfer of the decarboxylated acyl intermediate on an oxidized dihydrolipoyl group that is covalently amidated to the E2 enzyme (dihydrolipoyllysine-residue succinyltransferase or DLST). Can catalyze the decarboxylation of 2-oxoglutarate in vitro, but at a much lower rate than 2-oxoadipate. Responsible for the last step of L-lysine, L-hydroxylysine and L-tryptophan catabolism with the common product being 2-oxoadipate. The chain is 2-oxoadipate dehydrogenase complex component E1 (Dhtkd1) from Rattus norvegicus (Rat).